The following is a 232-amino-acid chain: Sugar fermentation stimulation protein homolog (232 aa).

This sequence belongs to the SfsA family.

This Pelagibacter ubique (strain HTCC1062) protein is Sugar fermentation stimulation protein homolog.